A 210-amino-acid polypeptide reads, in one-letter code: Thiamine-phosphate synthase (210 aa).

Residues glutamine 36–lysine 40 and asparagine 68 contribute to the 4-amino-2-methyl-5-(diphosphooxymethyl)pyrimidine site. Mg(2+) is bound by residues aspartate 69 and aspartate 88. Position 107 (serine 107) interacts with 4-amino-2-methyl-5-(diphosphooxymethyl)pyrimidine. Threonine 133–serine 135 lines the 2-[(2R,5Z)-2-carboxy-4-methylthiazol-5(2H)-ylidene]ethyl phosphate pocket. A 4-amino-2-methyl-5-(diphosphooxymethyl)pyrimidine-binding site is contributed by lysine 136. Residues glycine 164 and isoleucine 184 to serine 185 contribute to the 2-[(2R,5Z)-2-carboxy-4-methylthiazol-5(2H)-ylidene]ethyl phosphate site.

This sequence belongs to the thiamine-phosphate synthase family. Mg(2+) serves as cofactor.

It carries out the reaction 2-[(2R,5Z)-2-carboxy-4-methylthiazol-5(2H)-ylidene]ethyl phosphate + 4-amino-2-methyl-5-(diphosphooxymethyl)pyrimidine + 2 H(+) = thiamine phosphate + CO2 + diphosphate. It catalyses the reaction 2-(2-carboxy-4-methylthiazol-5-yl)ethyl phosphate + 4-amino-2-methyl-5-(diphosphooxymethyl)pyrimidine + 2 H(+) = thiamine phosphate + CO2 + diphosphate. The catalysed reaction is 4-methyl-5-(2-phosphooxyethyl)-thiazole + 4-amino-2-methyl-5-(diphosphooxymethyl)pyrimidine + H(+) = thiamine phosphate + diphosphate. Its pathway is cofactor biosynthesis; thiamine diphosphate biosynthesis; thiamine phosphate from 4-amino-2-methyl-5-diphosphomethylpyrimidine and 4-methyl-5-(2-phosphoethyl)-thiazole: step 1/1. Its function is as follows. Condenses 4-methyl-5-(beta-hydroxyethyl)thiazole monophosphate (THZ-P) and 2-methyl-4-amino-5-hydroxymethyl pyrimidine pyrophosphate (HMP-PP) to form thiamine monophosphate (TMP). The protein is Thiamine-phosphate synthase of Moorella thermoacetica (strain ATCC 39073 / JCM 9320).